A 251-amino-acid polypeptide reads, in one-letter code: Putative F-box protein L166 (251 aa).

Positions 1-46 (MDNICELFDEILPLIIEYLSDHDKVKFMTTCSRLYYFIDKVYYENI) constitute an F-box domain. Residues 188 to 251 (PEPESQENFR…RPKSFMKYRR (64 aa)) form a disordered region. Over residues 202–217 (TESNNNKPVNKSQPQI) the composition is skewed to polar residues. The segment covering 241-251 (KRPKSFMKYRR) has biased composition (basic residues).

The polypeptide is Putative F-box protein L166 (Acanthamoeba polyphaga (Amoeba)).